Consider the following 534-residue polypeptide: MLGTLGAGLSNFPWLSASILFPIGSAFVIPFFPDKGDGKEVRWFALSIALITFLITVGSYINGFDISNENVQLKENISWLPDLGLTWSVGADGMSMPLILLTSFITALAVLAAWPVKFKPKLFFFLILVMDGGQIAVFAVQDMLLFFLTWELELIPVYLLLAIWGGKNRQYAATKFIIYTAGSSIFILLAALAMGFYGTEIPNFEFSHLAAQDFSQKFQILCYVGLLIAFGVKLPIVPLHTWLPDAHGEATAPVHMLLAGILLKMGGYALLRFNAQLLPVAHAQFAPLLIVLGVVNIIYAALTSFAQRNLKRKIAYSSISHMGFVLIGIGSFSSLGTSGAMLQMVSHGLIGASLFFLVGATYDRTKTLKLDEMSGVGQKMRIMFALWTACSLASLALPGMSGFVSELMVFTGFVTDEVYTLPFRVVMASLAAIGVILTPIYLLSMLREIFFGKENPKLIEERKLIDAEPREVYIIACLLLPIIGIGLYPRLVTESYIASINNLVDRDLTAIKSAAKANIFSGTKKNDILKAPTI.

The next 14 membrane-spanning stretches (helical) occupy residues 12–32, 44–64, 96–116, 120–140, 144–164, 176–196, 220–240, 251–271, 285–305, 314–334, 340–360, 384–404, 425–445, and 472–492; these read FPWL…IPFF, FALS…INGF, MPLI…AWPV, PKLF…VFAV, LLFF…LAIW, FIIY…AMGF, ILCY…VPLH, TAPV…YALL, FAPL…LTSF, IAYS…SFSS, AMLQ…LVGA, FALW…SGFV, VVMA…LLSM, and VYII…PRLV.

It belongs to the complex I subunit 4 family.

It localises to the cellular thylakoid membrane. The catalysed reaction is a plastoquinone + NADH + (n+1) H(+)(in) = a plastoquinol + NAD(+) + n H(+)(out). It carries out the reaction a plastoquinone + NADPH + (n+1) H(+)(in) = a plastoquinol + NADP(+) + n H(+)(out). In terms of biological role, NDH-1 shuttles electrons from NAD(P)H, via FMN and iron-sulfur (Fe-S) centers, to quinones in the respiratory chain. The immediate electron acceptor for the enzyme in this species is believed to be plastoquinone. Couples the redox reaction to proton translocation (for every two electrons transferred, four hydrogen ions are translocated across the cytoplasmic membrane), and thus conserves the redox energy in a proton gradient. In Prochlorococcus marinus (strain AS9601), this protein is NAD(P)H-quinone oxidoreductase chain 4.